The chain runs to 324 residues: HPr kinase/phosphorylase (324 aa).

Active-site residues include His146 and Lys167. 161–168 contributes to the ATP binding site; that stretch reads GDSGLGKS. Ser168 provides a ligand contact to Mg(2+). Residue Asp185 is the Proton acceptor; for phosphorylation activity. Proton donor; for dephosphorylation activity of the active site. Residues 209–218 are important for the catalytic mechanism of both phosphorylation and dephosphorylation; sequence LEVRGLGLLD. Position 210 (Glu210) interacts with Mg(2+). Arg250 is a catalytic residue. The important for the catalytic mechanism of dephosphorylation stretch occupies residues 271–276; the sequence is QVAAGR.

It belongs to the HPrK/P family. As to quaternary structure, homohexamer. The cofactor is Mg(2+).

The catalysed reaction is [HPr protein]-L-serine + ATP = [HPr protein]-O-phospho-L-serine + ADP + H(+). It catalyses the reaction [HPr protein]-O-phospho-L-serine + phosphate + H(+) = [HPr protein]-L-serine + diphosphate. Its function is as follows. Catalyzes the ATP- as well as the pyrophosphate-dependent phosphorylation of a specific serine residue in HPr, a phosphocarrier protein of the phosphoenolpyruvate-dependent sugar phosphotransferase system (PTS). HprK/P also catalyzes the pyrophosphate-producing, inorganic phosphate-dependent dephosphorylation (phosphorolysis) of seryl-phosphorylated HPr (P-Ser-HPr). This Ralstonia nicotianae (strain ATCC BAA-1114 / GMI1000) (Ralstonia solanacearum) protein is HPr kinase/phosphorylase.